The primary structure comprises 297 residues: MGFVKVVKNKAYFKRYQVKFRRRREGKTDYYARKRLVIQDKNKYNTPKYRMIVRVTNRDIICQIAYARIEGDMIVCAAYAHELPKYGVKVGLTNYAAAYCTGLLLARRLLNRFGMDKIYEGQVEVTGDEYNVESIDGQPGAFTCYLDAGLARTTTGNKVFGALKGAVDGGLSIPHSTKRFPGYDSESKEFSAEVHRKHIMGQNVADYMRYLIEEDEDAYKKQFSQYIKNNVTPDMMEEMYKKAHAAIRENPVYEKKPKKEVKKKRWNRPKMSLAQKKDRVAQKKASFLRAQERAAES.

N-acetylglycine is present on glycine 2. An N6-acetyllysine mark is found at lysine 5 and lysine 48. Residue serine 185 is modified to Phosphoserine. N6-acetyllysine; alternate is present on lysine 220. Residue lysine 220 forms a Glycyl lysine isopeptide (Lys-Gly) (interchain with G-Cter in SUMO1); alternate linkage. Lysine 220 is covalently cross-linked (Glycyl lysine isopeptide (Lys-Gly) (interchain with G-Cter in SUMO2); alternate). Position 232 is a phosphothreonine (threonine 232). The disordered stretch occupies residues 252–297 (VYEKKPKKEVKKKRWNRPKMSLAQKKDRVAQKKASFLRAQERAAES). A compositionally biased stretch (basic residues) spans 258–268 (KKEVKKKRWNR). Serine 272 bears the Phosphoserine mark.

Belongs to the universal ribosomal protein uL18 family. In terms of assembly, component of the large ribosomal subunit (LSU). Part of the 5S RNP complex, which is a LSU subcomplex composed of the 5S RNA, RPL5 and RPL11. Component of a hexameric 5S RNP precursor complex, composed of 5S RNA, RRS1, RPF2/BXDC1, RPL5, RPL11 and HEATR3; this complex acts as a precursor for ribosome assembly. Interacts with NVL in an ATP-dependent manner. Interacts with RRP1B. Interacts with IPO5, IPO7 and KPNB1; these interactions may be involved in RPL5 nuclear import for the assembly of ribosomal subunits.

The protein resides in the cytoplasm. Its subcellular location is the nucleus. The protein localises to the nucleolus. Component of the ribosome, a large ribonucleoprotein complex responsible for the synthesis of proteins in the cell. The small ribosomal subunit (SSU) binds messenger RNAs (mRNAs) and translates the encoded message by selecting cognate aminoacyl-transfer RNA (tRNA) molecules. The large subunit (LSU) contains the ribosomal catalytic site termed the peptidyl transferase center (PTC), which catalyzes the formation of peptide bonds, thereby polymerizing the amino acids delivered by tRNAs into a polypeptide chain. The nascent polypeptides leave the ribosome through a tunnel in the LSU and interact with protein factors that function in enzymatic processing, targeting, and the membrane insertion of nascent chains at the exit of the ribosomal tunnel. As part of the 5S RNP/5S ribonucleoprotein particle it is an essential component of the LSU, required for its formation and the maturation of rRNAs. It also couples ribosome biogenesis to p53/TP53 activation. As part of the 5S RNP it accumulates in the nucleoplasm and inhibits MDM2, when ribosome biogenesis is perturbed, mediating the stabilization and the activation of TP53. The protein is Large ribosomal subunit protein uL18 (RPL5) of Bos taurus (Bovine).